The following is an 822-amino-acid chain: uncharacterized protein (822 aa).

At 1 to 13 (MCHNSVRSGNKAG) the chain is on the cytoplasmic side. A helical transmembrane segment spans residues 14–34 (FLGIKFGSALLSIATGAIAIA). Topologically, residues 35–44 (LLCKFHDHEA) are extracellular. Residues 45-65 (VLIVIVCSTLLYGIPSLISFI) traverse the membrane as a helical segment. Residues 66–76 (TETVFAPSKFH) lie on the Cytoplasmic side of the membrane. Residues 77–97 (IGYFYNVLNFALPLITMGCTV) form a helical membrane-spanning segment. Residues 98–120 (DYFHNTLRSPISVQSESHRVYIT) lie on the Extracellular side of the membrane. Residues 121-141 (TLDSLLIFTLFINGIQLGFFL) form a helical membrane-spanning segment. Over 142 to 822 (KDGNANNFGS…PVEELVSPSK (681 aa)) the chain is Cytoplasmic. Positions 271–290 (RNTQQATKVPTEKKSNHRSS) are disordered. The residue at position 690 (Ser690) is a Phosphoserine. Positions 698–712 (TLQSSHSPTKSTSGN) are enriched in polar residues. Disordered regions lie at residues 698–728 (TLQS…STVN) and 751–783 (NGEE…GYPE). Positions 761–776 (QSIQSSSSGSEQESAG) are enriched in low complexity.

The protein localises to the membrane. This is an uncharacterized protein from Saccharomyces cerevisiae (strain ATCC 204508 / S288c) (Baker's yeast).